Here is a 210-residue protein sequence, read N- to C-terminus: MELEVRDFTTEINILDSEKFSVSDEIFKCPFNQALIHQVISTYLTNSRQGTRSQKSRSEVSGSNKKPWRQKGTGRARSGSVKSPIWRSGGVTFAAKPKLYAQKINKKMYRGAIRSILSKLVCDNRLFLVRNLFIKEPKTKLLLEKLRTITSKKSILIFTDFLDKNLLLASRNVHKIEVRTATHIDPVSLINFNVTLIADNVIKKIEKQLV.

The segment covering 47-64 (SRQGTRSQKSRSEVSGSN) has biased composition (polar residues). The interval 47–83 (SRQGTRSQKSRSEVSGSNKKPWRQKGTGRARSGSVKS) is disordered.

The protein belongs to the universal ribosomal protein uL4 family. As to quaternary structure, part of the 50S ribosomal subunit.

One of the primary rRNA binding proteins, this protein initially binds near the 5'-end of the 23S rRNA. It is important during the early stages of 50S assembly. It makes multiple contacts with different domains of the 23S rRNA in the assembled 50S subunit and ribosome. In terms of biological role, forms part of the polypeptide exit tunnel. This Blochmanniella pennsylvanica (strain BPEN) protein is Large ribosomal subunit protein uL4.